A 105-amino-acid chain; its full sequence is UPF0045 protein ECM15 (105 aa).

This sequence belongs to the UPF0045 family.

In Eremothecium gossypii (strain ATCC 10895 / CBS 109.51 / FGSC 9923 / NRRL Y-1056) (Yeast), this protein is UPF0045 protein ECM15 (ECM15).